Consider the following 1228-residue polypeptide: AT-rich interactive domain-containing protein 4B (1228 aa).

Disordered regions lie at residues 123–167 (LPLT…DDRK) and 266–307 (KTEL…PFPE). A phosphoserine mark is found at S276, S295, and S296. Over residues 277–305 (EAEEEEEEEDDEKEKEDNSSEEEEEIEPF) the composition is skewed to acidic residues. One can recognise an ARID domain in the interval 306–398 (PEERENFLQQ…YLYGFEEYCR (93 aa)). Residues K428 and K461 each participate in a glycyl lysine isopeptide (Lys-Gly) (interchain with G-Cter in SUMO2) cross-link. Positions 437–464 (EVNVEDSKNMIPKEETPAEDESERKENI) are enriched in basic and acidic residues. Disordered stretches follow at residues 437-466 (EVNV…NIKP), 479-525 (PAQS…EQAR), 539-606 (RPAD…SDTG), 620-802 (LQAS…EEKR), 825-1129 (LNNS…RLPK), and 1168-1204 (SEVA…SITA). S482 carries the phosphoserine modification. The span at 483–511 (DQEKEANITKLEEKESLEDKDGATARAEE) shows a compositional bias: basic and acidic residues. The segment covering 546–555 (PKIKHRKKIK) has biased composition (basic residues). Residues 556 to 569 (NKLDKEKDRDEKYS) are compositionally biased toward basic and acidic residues. S579, S581, and S588 each carry phosphoserine. Residues 596-606 (DLADAKNSDTG) show a composition bias toward basic and acidic residues. The residue at position 630 (S630) is a Phosphoserine. Basic and acidic residues-rich tracts occupy residues 635–667 (ERCA…KEEL) and 691–700 (SPERLRKDVE). Residue K664 forms a Glycyl lysine isopeptide (Lys-Gly) (interchain with G-Cter in SUMO2) linkage. Phosphoserine occurs at positions 691 and 703. Positions 701-713 (AISEDTDFEEEDE) are enriched in acidic residues. Residue T706 is modified to Phosphothreonine. A compositionally biased stretch (basic and acidic residues) spans 721-730 (VKKDTTDKAL). Residues 744–753 (IQTNCLQSGS) show a composition bias toward polar residues. Basic and acidic residues-rich tracts occupy residues 755 to 765 (GKKEDRTKSKE), 825 to 843 (LNNS…RKDV), and 911 to 926 (KPVE…RKTE). Residues 927 to 937 (FPSSGSNSVLN) show a composition bias toward polar residues. S930 bears the Phosphoserine mark. T942 is modified (phosphothreonine). The span at 944–965 (ESPSSVTVTETSQQQSSVTVSV) shows a compositional bias: low complexity. S945 carries the phosphoserine modification. Residues 972–981 (EEVRSIKSET) are compositionally biased toward basic and acidic residues. The segment covering 1003 to 1017 (SSPAGFNASVSSSSS) has biased composition (low complexity). Positions 1046 to 1064 (KKQKRSHKATVVNNKKKGK) are enriched in basic residues. T1066 is subject to Phosphothreonine. S1068, S1069, S1071, and S1075 each carry phosphoserine. Residues 1112–1124 (KNGDKDPDLKEPS) are compositionally biased toward basic and acidic residues. A coiled-coil region spans residues 1141 to 1186 (ENMTSAERISILQEKLQEIRKHYLSLKSEVASIDRRRKRLKKKERE). Positions 1188-1204 (AATSSSSSSPSSSSITA) are enriched in low complexity.

In terms of assembly, component of a Sin3A corepressor complex consisting of SIN3A, SAP130, SUDS3/SAP45, SAP180, HDAC1 and HDAC2. Interacts with ARID4A. Interacts with AR.

The protein resides in the nucleus. Acts as a transcriptional repressor. May function in the assembly and/or enzymatic activity of the Sin3A corepressor complex or in mediating interactions between the complex and other regulatory complexes. Plays a role in the regulation of epigenetic modifications at the PWS/AS imprinting center near the SNRPN promoter, where it might function as part of a complex with RB1 and ARID4A. Involved in spermatogenesis, together with ARID4A, where it functions as a transcriptional coactivator for AR (androgen receptor) and enhances expression of genes required for sperm maturation. Regulates expression of the tight junction protein CLDN3 in the testis, which is important for integrity of the blood-testis barrier. Plays a role in myeloid homeostasis where it regulates the histone methylation state of bone marrow cells and expression of various genes involved in hematopoiesis. May function as a leukemia suppressor. The polypeptide is AT-rich interactive domain-containing protein 4B (Arid4b) (Rattus norvegicus (Rat)).